The chain runs to 248 residues: Cytochrome c oxidase subunit 2 (248 aa).

The Mitochondrial intermembrane segment spans residues 1-36; the sequence is MLFFNSILNDAPSSWALYFQDGASPSYLGVTHLNDY. The chain crosses the membrane as a helical span at residues 37–57; the sequence is LMFYLTFIFIGVIYAICKAVI. At 58–75 the chain is on the mitochondrial matrix side; the sequence is EYNYNSHPIAAKYTTHGS. A helical transmembrane segment spans residues 76 to 100; sequence IVEFIWTLIPALILILVALPSFKLL. The Mitochondrial intermembrane portion of the chain corresponds to 101–248; sequence YLLDEVQKPS…DFLAWLEENS (148 aa). The Cu cation site is built by H182, C217, E219, C221, H225, and M228. Mg(2+) is bound at residue E219.

It belongs to the cytochrome c oxidase subunit 2 family. Component of the cytochrome c oxidase (complex IV, CIV), a multisubunit enzyme composed of a catalytic core of 3 subunits and several supernumerary subunits. The complex exists as a monomer or a dimer and forms supercomplexes (SCs) in the inner mitochondrial membrane with ubiquinol-cytochrome c oxidoreductase (cytochrome b-c1 complex, complex III, CIII). It depends on Cu cation as a cofactor.

It localises to the mitochondrion inner membrane. It carries out the reaction 4 Fe(II)-[cytochrome c] + O2 + 8 H(+)(in) = 4 Fe(III)-[cytochrome c] + 2 H2O + 4 H(+)(out). Its function is as follows. Component of the cytochrome c oxidase, the last enzyme in the mitochondrial electron transport chain which drives oxidative phosphorylation. The respiratory chain contains 3 multisubunit complexes succinate dehydrogenase (complex II, CII), ubiquinol-cytochrome c oxidoreductase (cytochrome b-c1 complex, complex III, CIII) and cytochrome c oxidase (complex IV, CIV), that cooperate to transfer electrons derived from NADH and succinate to molecular oxygen, creating an electrochemical gradient over the inner membrane that drives transmembrane transport and the ATP synthase. Cytochrome c oxidase is the component of the respiratory chain that catalyzes the reduction of oxygen to water. Electrons originating from reduced cytochrome c in the intermembrane space (IMS) are transferred via the dinuclear copper A center (CU(A)) of subunit 2 and heme A of subunit 1 to the active site in subunit 1, a binuclear center (BNC) formed by heme A3 and copper B (CU(B)). The BNC reduces molecular oxygen to 2 water molecules using 4 electrons from cytochrome c in the IMS and 4 protons from the mitochondrial matrix. This chain is Cytochrome c oxidase subunit 2 (cox2), found in Schizosaccharomyces pombe (strain 972 / ATCC 24843) (Fission yeast).